The chain runs to 373 residues: MLIIIRPSGEIALKSPRSRRNFEHTLANNIRSVIKEGKIWRSQGVLFLEVNDNNKNIEELSKVFGIASFSPVMSIKSYNNNLEDIINKAKEVFAEIVKGKIFSVRAKRIGSHNFTSLDVQRKVGEALYPFSRGVNLENPEVEVFIEIRNDVAYFYYKIIKGPRGLPVGVAGKTVVLFSGGIDSPVATWMMMKRGSIPVILNFNLGGSVHRKFVLEELSVLRKWSGGHKLKLFIVNGTDVLIKLSQIEKRNRVVMLKRVMYKVAERLCDKANAKSITTGESLSQVSSQTMTNLYVTEYGIKYPIFRPLIGFDKEEIVELARKIGTYEYSIKLPEYCAISTKARTSVELNEVLKDEENLNIDYEKVLENSEVIEI.

A THUMP domain is found at 54 to 158 (NKNIEELSKV…NDVAYFYYKI (105 aa)). ATP contacts are provided by residues 176 to 177 (LF), 201 to 202 (NF), lysine 256, glycine 278, and glutamine 287.

It belongs to the ThiI family.

Its subcellular location is the cytoplasm. It carries out the reaction [ThiI sulfur-carrier protein]-S-sulfanyl-L-cysteine + a uridine in tRNA + 2 reduced [2Fe-2S]-[ferredoxin] + ATP + H(+) = [ThiI sulfur-carrier protein]-L-cysteine + a 4-thiouridine in tRNA + 2 oxidized [2Fe-2S]-[ferredoxin] + AMP + diphosphate. The catalysed reaction is [ThiS sulfur-carrier protein]-C-terminal Gly-Gly-AMP + S-sulfanyl-L-cysteinyl-[cysteine desulfurase] + AH2 = [ThiS sulfur-carrier protein]-C-terminal-Gly-aminoethanethioate + L-cysteinyl-[cysteine desulfurase] + A + AMP + 2 H(+). The protein operates within cofactor biosynthesis; thiamine diphosphate biosynthesis. Functionally, catalyzes the ATP-dependent transfer of a sulfur to tRNA to produce 4-thiouridine in position 8 of tRNAs, which functions as a near-UV photosensor. Also catalyzes the transfer of sulfur to the sulfur carrier protein ThiS, forming ThiS-thiocarboxylate. This is a step in the synthesis of thiazole, in the thiamine biosynthesis pathway. The sulfur is donated as persulfide by IscS. This is Probable tRNA sulfurtransferase from Saccharolobus islandicus (strain L.S.2.15 / Lassen #1) (Sulfolobus islandicus).